We begin with the raw amino-acid sequence, 748 residues long: Phytochrome-like protein Cph1 (748 aa).

In terms of domain architecture, PAS spans 19 to 86 (AIHTAHLIQP…IQSRLTAGQI (68 aa)). The interval 87–510 (SSLNPSKLWA…KKAIVNLILR (424 aa)) is chromophore binding domain. In terms of domain architecture, GAF spans 152–320 (NLRDFYDVIV…VVFSNISAQE (169 aa)). Position 259 (Cys259) interacts with a tetrapyrrole. Positions 535–748 (IASHDLQEPL…TFYFSIPIGN (214 aa)) constitute a Histidine kinase domain. At His538 the chain carries Phosphohistidine; by autocatalysis.

It in the N-terminal section; belongs to the phytochrome family. In terms of assembly, homodimer. In terms of processing, contains one covalently linked tetrapyrrole chromophore.

The enzyme catalyses ATP + protein L-histidine = ADP + protein N-phospho-L-histidine.. Functionally, regulatory photoreceptor which exists in two forms that are reversibly interconvertible by light: the R form that absorbs maximally in the red region of the spectrum and the FR form that absorbs maximally in the far-red region. Also has a slight blue shift for the far-red maximum. Forms a two-component system with the Rrcp1 response regulator. In Synechocystis sp. (strain ATCC 27184 / PCC 6803 / Kazusa), this protein is Phytochrome-like protein Cph1 (cph1).